A 627-amino-acid polypeptide reads, in one-letter code: Zinc finger protein 256 (627 aa).

A KRAB domain is found at 14–96 (VTFEDVAVYF…QKTNPCEICG (83 aa)). Positions 55–76 (GSGAGDEEAPYQQSTSPQRVSQ) are disordered. Over residues 65–75 (YQQSTSPQRVS) the composition is skewed to polar residues. 15 consecutive C2H2-type zinc fingers follow at residues 90–112 (NPCE…QGTH), 239–261 (YMCS…LRVH), 267–289 (YTCG…RRIH), 295–317 (HQCD…QRVH), 323–345 (YKCS…QRIH), 351–373 (YECS…QRVH), 379–401 (YMCS…RRLH), 407–429 (YECS…QRVH), 435–457 (HECH…ERVH), 463–485 (YECS…WKVH), 491–513 (YECG…QRVH), 519–541 (YECN…RRSH), 547–569 (YECS…RRVH), 575–597 (YECS…QRIH), and 603–625 (YECS…QNVH).

The protein belongs to the krueppel C2H2-type zinc-finger protein family. Interacts with TRIM28.

It localises to the nucleus. Its function is as follows. Transcriptional repressor that plays a role in cell proliferation. Requires TRIM28 for its activity. The sequence is that of Zinc finger protein 256 (ZNF256) from Homo sapiens (Human).